We begin with the raw amino-acid sequence, 213 residues long: Orotate phosphoribosyltransferase (213 aa).

Residue K26 coordinates 5-phospho-alpha-D-ribose 1-diphosphate. Residue 34–35 (FF) coordinates orotate. 5-phospho-alpha-D-ribose 1-diphosphate contacts are provided by residues 72–73 (YK), R99, K100, K103, H105, and 124–132 (DDVITAGTA). Residues T128 and R156 each contribute to the orotate site.

This sequence belongs to the purine/pyrimidine phosphoribosyltransferase family. PyrE subfamily. Homodimer. Mg(2+) serves as cofactor.

It carries out the reaction orotidine 5'-phosphate + diphosphate = orotate + 5-phospho-alpha-D-ribose 1-diphosphate. It participates in pyrimidine metabolism; UMP biosynthesis via de novo pathway; UMP from orotate: step 1/2. Catalyzes the transfer of a ribosyl phosphate group from 5-phosphoribose 1-diphosphate to orotate, leading to the formation of orotidine monophosphate (OMP). The protein is Orotate phosphoribosyltransferase of Klebsiella pneumoniae (strain 342).